The primary structure comprises 534 residues: Protein tweety homolog 2 (534 aa).

Residues 1–44 (MQAARVDYIAPWWVVWLHSVPHVGLRLQPVNSTFSPGDESYQES) are Extracellular-facing. The N-linked (GlcNAc...) asparagine glycan is linked to asparagine 31. The helical transmembrane segment at 45 to 65 (LLFLGLVAAVCLGLNLIFLVA) threads the bilayer. The Cytoplasmic portion of the chain corresponds to 66-87 (YLVCACHCRRDDAVQTKQHHSC). Residues 88 to 108 (CITWTAVVAGLICCAAVGVGF) traverse the membrane as a helical segment. The Extracellular portion of the chain corresponds to 109–213 (YGNSETNDGA…QTGYVEYYRW (105 aa)). The Ca(2+) site is built by glutamate 113 and aspartate 116. N-linked (GlcNAc) asparagine glycosylation is present at asparagine 129. Residues 164 to 166 (RGD) carry the RGD motif. Position 199 is a phosphothreonine (threonine 199). The helical transmembrane segment at 214-234 (LSYLLLFILDLVICLIACLGL) threads the bilayer. The Cytoplasmic segment spans residues 235-240 (AKRSKC). Residues 241–261 (LLASMLCCGALSLLLSWASLA) form a helical membrane-spanning segment. Residues 262 to 388 (ADGSAAVATS…AGICYDGLQG (127 aa)) lie on the Extracellular side of the membrane. 2 disulfides stabilise this stretch: cysteine 274–cysteine 382 and cysteine 300–cysteine 367. N-linked (GlcNAc...) asparagine glycosylation occurs at asparagine 283. N-linked (GlcNAc) asparagine glycosylation occurs at asparagine 352. A helical membrane pass occupies residues 389–409 (LLYLGLFSFLAALAFSTMICA). Residues 410–534 (GPRAWKHFTT…LRHYGNQFPA (125 aa)) are Cytoplasmic-facing. Serine 504 is subject to Phosphoserine. The PY-motif; mediates interaction with NEDD4L motif lies at 506–509 (PPTY).

Belongs to the tweety family. As to quaternary structure, homodimer. Forms cis-homodimers in the presence of Ca(+2) and forms monomers and trans-dimers in the absence of Ca(2+). Interacts with NEDD4L. Post-translationally, N- Glycosylated. Contains high-mannose, hybrid and complex oligosaccharides. In terms of processing, ubiquitinated by NEDD4L, leading to its proteasomal degradation. Expressed at higher level in brain and testis and at lower levels in heart, ovary, spleen and peripheral blood leukocytes. Up-regulated in 13 of 16 renal cell carcinoma samples examined. Up-regulated in colon carcinoma.

The protein localises to the cell membrane. The catalysed reaction is chloride(in) = chloride(out). It catalyses the reaction L-glutamate(out) = L-glutamate(in). Functionally, calcium-independent, swelling-dependent volume-regulated anion channel (VRAC-swell) which plays a pivotal role in the process of regulatory volume decrease (RVD) in the brain through the efflux of anions like chloride and organic osmolytes like glutamate. Probable large-conductance Ca(2+)-activated chloride channel. The polypeptide is Protein tweety homolog 2 (TTYH2) (Homo sapiens (Human)).